A 338-amino-acid polypeptide reads, in one-letter code: Glycerol-3-phosphate dehydrogenase [NAD(P)+] (338 aa).

NADPH-binding residues include Ser-14, Tyr-15, His-35, and Lys-109. Lys-109, Gly-138, and Thr-140 together coordinate sn-glycerol 3-phosphate. Ala-142 is an NADPH binding site. Residues Lys-194, Asp-247, Ser-257, Arg-258, and Asn-259 each contribute to the sn-glycerol 3-phosphate site. Lys-194 functions as the Proton acceptor in the catalytic mechanism. Arg-258 is a binding site for NADPH. NADPH contacts are provided by Val-282 and Glu-284.

It belongs to the NAD-dependent glycerol-3-phosphate dehydrogenase family.

It is found in the cytoplasm. The enzyme catalyses sn-glycerol 3-phosphate + NAD(+) = dihydroxyacetone phosphate + NADH + H(+). The catalysed reaction is sn-glycerol 3-phosphate + NADP(+) = dihydroxyacetone phosphate + NADPH + H(+). It functions in the pathway membrane lipid metabolism; glycerophospholipid metabolism. Catalyzes the reduction of the glycolytic intermediate dihydroxyacetone phosphate (DHAP) to sn-glycerol 3-phosphate (G3P), the key precursor for phospholipid synthesis. This chain is Glycerol-3-phosphate dehydrogenase [NAD(P)+], found in Shewanella oneidensis (strain ATCC 700550 / JCM 31522 / CIP 106686 / LMG 19005 / NCIMB 14063 / MR-1).